The chain runs to 681 residues: UvrABC system protein B (681 aa).

Residues 32 to 419 form the Helicase ATP-binding domain; that stretch reads ARLSRGERDV…GGEYVEQVIR (388 aa). Residue 45-52 coordinates ATP; that stretch reads GATGTGKS. A Beta-hairpin motif is present at residues 98-121; that stretch reads YYDYYQPEAYIAQTDTYIEKDSSI. One can recognise a Helicase C-terminal domain in the interval 436 to 602; the sequence is QIDDLIHEIK…PLRKKIADIL (167 aa). Residues 607–616 show a composition bias toward polar residues; it reads ESKAESTAPS. Positions 607–626 are disordered; the sequence is ESKAESTAPSSDAVVVSKTN. Residues 636–671 enclose the UVR domain; that stretch reads RSLIDDLTTQMGTAARELKFELAGRLRDEIAELKKE.

This sequence belongs to the UvrB family. Forms a heterotetramer with UvrA during the search for lesions. Interacts with UvrC in an incision complex.

It localises to the cytoplasm. In terms of biological role, the UvrABC repair system catalyzes the recognition and processing of DNA lesions. A damage recognition complex composed of 2 UvrA and 2 UvrB subunits scans DNA for abnormalities. Upon binding of the UvrA(2)B(2) complex to a putative damaged site, the DNA wraps around one UvrB monomer. DNA wrap is dependent on ATP binding by UvrB and probably causes local melting of the DNA helix, facilitating insertion of UvrB beta-hairpin between the DNA strands. Then UvrB probes one DNA strand for the presence of a lesion. If a lesion is found the UvrA subunits dissociate and the UvrB-DNA preincision complex is formed. This complex is subsequently bound by UvrC and the second UvrB is released. If no lesion is found, the DNA wraps around the other UvrB subunit that will check the other stand for damage. In Corynebacterium diphtheriae (strain ATCC 700971 / NCTC 13129 / Biotype gravis), this protein is UvrABC system protein B.